The primary structure comprises 148 residues: 3-dehydroquinate dehydratase (148 aa).

Tyr-23 functions as the Proton acceptor in the catalytic mechanism. Asn-75, His-81, and Asp-88 together coordinate substrate. The active-site Proton donor is the His-101. Substrate-binding positions include 102-103 and Arg-112; that span reads LS.

Belongs to the type-II 3-dehydroquinase family. Homododecamer.

The catalysed reaction is 3-dehydroquinate = 3-dehydroshikimate + H2O. It participates in metabolic intermediate biosynthesis; chorismate biosynthesis; chorismate from D-erythrose 4-phosphate and phosphoenolpyruvate: step 3/7. Functionally, catalyzes a trans-dehydration via an enolate intermediate. The chain is 3-dehydroquinate dehydratase from Xylella fastidiosa (strain M23).